The sequence spans 236 residues: Ubiquinone biosynthesis O-methyltransferase (236 aa).

S-adenosyl-L-methionine contacts are provided by Arg-40, Gly-59, Asp-80, and Leu-124.

Belongs to the methyltransferase superfamily. UbiG/COQ3 family.

It catalyses the reaction a 3-demethylubiquinol + S-adenosyl-L-methionine = a ubiquinol + S-adenosyl-L-homocysteine + H(+). It carries out the reaction a 3-(all-trans-polyprenyl)benzene-1,2-diol + S-adenosyl-L-methionine = a 2-methoxy-6-(all-trans-polyprenyl)phenol + S-adenosyl-L-homocysteine + H(+). It functions in the pathway cofactor biosynthesis; ubiquinone biosynthesis. Functionally, O-methyltransferase that catalyzes the 2 O-methylation steps in the ubiquinone biosynthetic pathway. The chain is Ubiquinone biosynthesis O-methyltransferase from Saccharophagus degradans (strain 2-40 / ATCC 43961 / DSM 17024).